The sequence spans 67 residues: Sperm protamine P1 (67 aa).

The interval 1 to 67 is disordered; the sequence is MASYRNSRSR…RRRKRNNENK (67 aa). Composition is skewed to basic residues over residues 7 to 25 and 34 to 67; these read SRSR…RSRV and RSSR…NENK.

This sequence belongs to the protamine P1 family. As to expression, testis.

The protein localises to the nucleus. It is found in the chromosome. Its function is as follows. Protamines substitute for histones in the chromatin of sperm during the haploid phase of spermatogenesis. They compact sperm DNA into a highly condensed, stable and inactive complex. This chain is Sperm protamine P1 (PRM1), found in Isoodon macrourus (Short-nosed bandicoot).